Consider the following 642-residue polypeptide: MWRAIWLRISEKGLRRPPPPSLRTVTTSCTTMGADGVHTVNTTERLAKLRELMKQHSVQAFVVPSEDQHSSEYLANCDKRRAFISGFDGSAGCAIITTDKAYLFTDGRYFLQAEKQLDKNWKLMKQGLPDVPTWQDFLYKNLGPHTQIGIDATLLAASDAESLTKQLTPKYSKLVSLKENLVDVVWGEDRPSRPQNSVFHLDVKYSGQSHLDKIATLREEMKKKKAEAIVVTMLDEVAWLLNLRGSDIEYNPVFFAYAVVTMDEVILFIDSAQLDDTARHNLEHVYTMPYEAIFEHLNSLSRTLELDRDSKVLIGDRASLAVADAIGKDNYTIVRSPIADLKAIKNKTELEGFRQSHIRDGAALVRYFAWLEEQLNHGTVINESQGADKLEAFRSELDLFRGLSFDTISGTGPNGAIIHYKPDPNDCAIIKKDQVYLCDSGGQFLDGTTDVTRTWHFGTPTDEEKRAFTRVLQGHIAIDTAVFPNGTTGYVIDAFARRALWQDGLDYRHGTGHGVGHFLNVHEGPHGIGVRIALNNTPLKAGMTVSNEPGYYADGKFGIRIESIVLVREVKTPNNFGDKGYLGFENVTMCPIHKNLVDVSLLNEQEKKWLDEYHAETWDKVSPLLKGDTRALEWLRRECSPL.

Residues aspartate 439, aspartate 450, glutamate 548, and glutamate 562 each coordinate Mn(2+).

The protein belongs to the peptidase M24B family. It depends on Mn(2+) as a cofactor.

The catalysed reaction is Release of any N-terminal amino acid, including proline, that is linked to proline, even from a dipeptide or tripeptide.. Its function is as follows. Catalyzes the removal of a penultimate prolyl residue from the N-termini of peptides. The protein is Probable Xaa-Pro aminopeptidase P (AMPP) of Laccaria bicolor (strain S238N-H82 / ATCC MYA-4686) (Bicoloured deceiver).